The primary structure comprises 227 residues: Pre-hexon-linking protein VIII (227 aa).

Position 64 is a phosphothreonine; by host (Thr-64). Residues 112–157 constitute a propeptide that is removed on maturation; that stretch reads FRHRVRSPGQGITHLTIRGRGIQLNDESVSSSLGLRPDGTFQIGGA. Residues Ser-118 and Ser-174 each carry the phosphoserine; by host modification.

Belongs to the adenoviridae hexon-linking protein family. Interacts with the peripentonal hexons as well as the hexons in the facets. Part of a complex composed of the core-capsid bridging protein, the endosome lysis protein VI and the hexon-linking protein VIII; these interactions bridge the virus core to the capsid. Cleaved by the viral protease during virion maturation. May cause the middle segment to be shed from the capsid.

It localises to the virion. The protein resides in the host nucleus. Structural component of the virion that acts as a cement protein on the capsid interior and which glue the peripentonal hexons and group-of-nine hexons together. This Human adenovirus C serotype 5 (HAdV-5) protein is Pre-hexon-linking protein VIII.